A 393-amino-acid chain; its full sequence is Bifunctional enzyme Fae/Hps (393 aa).

A formaldehyde-activating enzyme region spans residues 1 to 161 (MYQIGEALVG…YEKDRGAHAV (161 aa)). Catalysis depends on His17, which acts as the Proton donor. Residues Asp19, Leu48, Lys66, Thr68, and Gln83 each contribute to the substrate site. Residues 162–393 (MGFKVQRLWD…IDQFRVMTDF (232 aa)) form a 3-hexulose-6-phosphate synthase region.

This sequence in the N-terminal section; belongs to the formaldehyde-activating enzyme family. The protein in the C-terminal section; belongs to the HPS/KGPDC family. HPS subfamily.

The enzyme catalyses 5,6,7,8-tetrahydromethanopterin + formaldehyde = 5,10-methylenetetrahydromethanopterin + H2O. The catalysed reaction is D-ribulose 5-phosphate + formaldehyde = D-arabino-hex-3-ulose 6-phosphate. Its pathway is carbohydrate biosynthesis; D-ribose 5-phosphate biosynthesis. Its function is as follows. Catalyzes the condensation of formaldehyde with tetrahydromethanopterin (H(4)MPT) to 5,10-methylenetetrahydromethanopterin. In terms of biological role, catalyzes the reversible formation of ribulose-5-phosphate and formaldehyde from 3-hexulose-6-phosphate. In Methanosphaerula palustris (strain ATCC BAA-1556 / DSM 19958 / E1-9c), this protein is Bifunctional enzyme Fae/Hps.